The chain runs to 457 residues: Argininosuccinate lyase (457 aa).

It belongs to the lyase 1 family. Argininosuccinate lyase subfamily.

It localises to the cytoplasm. The catalysed reaction is 2-(N(omega)-L-arginino)succinate = fumarate + L-arginine. It participates in amino-acid biosynthesis; L-arginine biosynthesis; L-arginine from L-ornithine and carbamoyl phosphate: step 3/3. This Salmonella arizonae (strain ATCC BAA-731 / CDC346-86 / RSK2980) protein is Argininosuccinate lyase.